We begin with the raw amino-acid sequence, 44 residues long: Photosystem I reaction center subunit IX (44 aa).

A helical membrane pass occupies residues 7 to 27 (YLSVAPVLTTLWFGSLAGLLI).

This sequence belongs to the PsaJ family.

It localises to the plastid. The protein resides in the chloroplast thylakoid membrane. In terms of biological role, may help in the organization of the PsaE and PsaF subunits. The polypeptide is Photosystem I reaction center subunit IX (Drimys granadensis).